The following is a 210-amino-acid chain: Redox-sensing transcriptional repressor Rex (210 aa).

Residues 17 to 56 constitute a DNA-binding region (H-T-H motif); the sequence is KYHRYLYELLKNDVDRISSKELSEKIGFTASQIRQDLNCF. 91–96 contributes to the NAD(+) binding site; the sequence is GAGNIG.

It belongs to the transcriptional regulatory Rex family. As to quaternary structure, homodimer.

It localises to the cytoplasm. Its function is as follows. Modulates transcription in response to changes in cellular NADH/NAD(+) redox state. The protein is Redox-sensing transcriptional repressor Rex of Clostridium botulinum (strain ATCC 19397 / Type A).